A 335-amino-acid polypeptide reads, in one-letter code: Fructose-1,6-bisphosphatase class 1 (335 aa).

Mg(2+)-binding residues include glutamate 92, aspartate 114, leucine 116, and aspartate 117. Substrate is bound by residues 117–120, asparagine 210, tyrosine 242, and lysine 274; that span reads DGSS. Residue glutamate 280 coordinates Mg(2+).

Belongs to the FBPase class 1 family. Homotetramer. Mg(2+) is required as a cofactor.

It is found in the cytoplasm. It catalyses the reaction beta-D-fructose 1,6-bisphosphate + H2O = beta-D-fructose 6-phosphate + phosphate. It functions in the pathway carbohydrate biosynthesis; gluconeogenesis. The protein is Fructose-1,6-bisphosphatase class 1 of Lawsonia intracellularis (strain PHE/MN1-00).